A 446-amino-acid chain; its full sequence is Bifunctional protein GlmU (446 aa).

The segment at 1–226 (MLAIAILAAG…PFEIKGINDR (226 aa)) is pyrophosphorylase. Residues 7-10 (LAAG), lysine 21, glutamine 73, and 78-79 (GT) contribute to the UDP-N-acetyl-alpha-D-glucosamine site. Aspartate 103 contributes to the Mg(2+) binding site. Positions 140, 155, 170, and 224 each coordinate UDP-N-acetyl-alpha-D-glucosamine. Asparagine 224 lines the Mg(2+) pocket. Residues 227–247 (VQLSECEHYIQEELKSLWMSK) are linker. Positions 248-446 (GVSFVDPISC…SKAIIRTKAD (199 aa)) are N-acetyltransferase. 2 residues coordinate UDP-N-acetyl-alpha-D-glucosamine: arginine 329 and lysine 347. The active-site Proton acceptor is histidine 359. UDP-N-acetyl-alpha-D-glucosamine is bound by residues tyrosine 362 and asparagine 373. Acetyl-CoA-binding residues include alanine 376, alanine 419, and arginine 436.

It in the N-terminal section; belongs to the N-acetylglucosamine-1-phosphate uridyltransferase family. In the C-terminal section; belongs to the transferase hexapeptide repeat family. Homotrimer. Requires Mg(2+) as cofactor.

It is found in the cytoplasm. It catalyses the reaction alpha-D-glucosamine 1-phosphate + acetyl-CoA = N-acetyl-alpha-D-glucosamine 1-phosphate + CoA + H(+). The enzyme catalyses N-acetyl-alpha-D-glucosamine 1-phosphate + UTP + H(+) = UDP-N-acetyl-alpha-D-glucosamine + diphosphate. It participates in nucleotide-sugar biosynthesis; UDP-N-acetyl-alpha-D-glucosamine biosynthesis; N-acetyl-alpha-D-glucosamine 1-phosphate from alpha-D-glucosamine 6-phosphate (route II): step 2/2. Its pathway is nucleotide-sugar biosynthesis; UDP-N-acetyl-alpha-D-glucosamine biosynthesis; UDP-N-acetyl-alpha-D-glucosamine from N-acetyl-alpha-D-glucosamine 1-phosphate: step 1/1. The protein operates within bacterial outer membrane biogenesis; LPS lipid A biosynthesis. Its function is as follows. Catalyzes the last two sequential reactions in the de novo biosynthetic pathway for UDP-N-acetylglucosamine (UDP-GlcNAc). The C-terminal domain catalyzes the transfer of acetyl group from acetyl coenzyme A to glucosamine-1-phosphate (GlcN-1-P) to produce N-acetylglucosamine-1-phosphate (GlcNAc-1-P), which is converted into UDP-GlcNAc by the transfer of uridine 5-monophosphate (from uridine 5-triphosphate), a reaction catalyzed by the N-terminal domain. The polypeptide is Bifunctional protein GlmU (Prochlorococcus marinus (strain NATL2A)).